A 291-amino-acid polypeptide reads, in one-letter code: HTH-type transcriptional regulator DgcR (291 aa).

Residues 1 to 58 (MRLRHIEVFHAIYTTGSITNAAKALHVSQPSVSKVLSHAEMQLGFKLFERVKGRLIPT) form the HTH lysR-type domain. Residues 18–37 (ITNAAKALHVSQPSVSKVLS) constitute a DNA-binding region (H-T-H motif).

This sequence belongs to the LysR transcriptional regulatory family.

Functionally, transcriptional regulator that positively regulates the expression of the D-Glu gene cluster (DGC). The cluster includes dgcN and dgcA, which are involved in a deamination-independent D-glutamate degradation pathway, dgcR itself, dgcT, dgcP and dgcH. Acts by binding the consensus sequence upstream of dgcR, dgcT, dgcP and dgcH. The polypeptide is HTH-type transcriptional regulator DgcR (Pseudoalteromonas sp).